Reading from the N-terminus, the 296-residue chain is MNMKKLATLVSAVALSATVSANAMAKDTIALVVSTLNNPFFVSLKDGAQKEADKLGYNLVVLDSQNNPAKELANVQDLTVRGTKILLINPTDSDAVGNAVKMANQANIPVITLDRQATKGEVVSHIASDNVLGGKIAGDYIAKKAGEGAKVIELQGIAGTSAARERGEGFQQAVAAHKFNVLASQPADFDRIKGLNVMQNLLTAHPDVQAVFAQNDEMALGALRALQTAGKSDVMVVGFDGTPDGEKAVNDGKLAATIAQLPDQIGAKGVETADKVLKGEKVQAKYPVDLKLVVKQ.

The signal sequence occupies residues 1–25; sequence MNMKKLATLVSAVALSATVSANAMA.

The protein belongs to the bacterial solute-binding protein 2 family. As to quaternary structure, the complex is composed of an ATP-binding protein (RbsA), two transmembrane proteins (RbsC) and a solute-binding protein (RbsB).

It localises to the periplasm. Its function is as follows. Part of the ABC transporter complex RbsABC involved in ribose import. Binds ribose. Also serves as the primary chemoreceptor for chemotaxis. The sequence is that of Ribose import binding protein RbsB from Escherichia coli (strain K12).